We begin with the raw amino-acid sequence, 287 residues long: Elongation factor Ts (287 aa).

The segment at 80–83 (TDFL) is involved in Mg(2+) ion dislocation from EF-Tu.

This sequence belongs to the EF-Ts family.

The protein resides in the cytoplasm. Associates with the EF-Tu.GDP complex and induces the exchange of GDP to GTP. It remains bound to the aminoacyl-tRNA.EF-Tu.GTP complex up to the GTP hydrolysis stage on the ribosome. This chain is Elongation factor Ts, found in Pseudomonas putida (strain GB-1).